A 156-amino-acid polypeptide reads, in one-letter code: Small ribosomal subunit protein uS7 (156 aa).

This sequence belongs to the universal ribosomal protein uS7 family. Part of the 30S ribosomal subunit. Contacts proteins S9 and S11.

Functionally, one of the primary rRNA binding proteins, it binds directly to 16S rRNA where it nucleates assembly of the head domain of the 30S subunit. Is located at the subunit interface close to the decoding center, probably blocks exit of the E-site tRNA. This Shewanella frigidimarina (strain NCIMB 400) protein is Small ribosomal subunit protein uS7.